We begin with the raw amino-acid sequence, 224 residues long: Urease accessory protein UreF (224 aa).

Belongs to the UreF family. As to quaternary structure, ureD, UreF and UreG form a complex that acts as a GTP-hydrolysis-dependent molecular chaperone, activating the urease apoprotein by helping to assemble the nickel containing metallocenter of UreC. The UreE protein probably delivers the nickel.

It localises to the cytoplasm. Required for maturation of urease via the functional incorporation of the urease nickel metallocenter. The polypeptide is Urease accessory protein UreF (Azotobacter vinelandii (strain DJ / ATCC BAA-1303)).